Consider the following 413-residue polypeptide: Multifunctional CCA protein (413 aa).

G8 and R11 together coordinate ATP. Residues G8 and R11 each coordinate CTP. Residues D21 and D23 each coordinate Mg(2+). 3 residues coordinate ATP: R91, R143, and R146. CTP is bound by residues R91, R143, and R146. Residues 232–333 enclose the HD domain; it reads TGVHVMMVID…VRLLERADAL (102 aa).

The protein belongs to the tRNA nucleotidyltransferase/poly(A) polymerase family. Bacterial CCA-adding enzyme type 1 subfamily. As to quaternary structure, monomer. Can also form homodimers and oligomers. Mg(2+) is required as a cofactor. The cofactor is Ni(2+).

The enzyme catalyses a tRNA precursor + 2 CTP + ATP = a tRNA with a 3' CCA end + 3 diphosphate. It carries out the reaction a tRNA with a 3' CCA end + 2 CTP + ATP = a tRNA with a 3' CCACCA end + 3 diphosphate. Functionally, catalyzes the addition and repair of the essential 3'-terminal CCA sequence in tRNAs without using a nucleic acid template. Adds these three nucleotides in the order of C, C, and A to the tRNA nucleotide-73, using CTP and ATP as substrates and producing inorganic pyrophosphate. tRNA 3'-terminal CCA addition is required both for tRNA processing and repair. Also involved in tRNA surveillance by mediating tandem CCA addition to generate a CCACCA at the 3' terminus of unstable tRNAs. While stable tRNAs receive only 3'-terminal CCA, unstable tRNAs are marked with CCACCA and rapidly degraded. In Burkholderia pseudomallei (strain 668), this protein is Multifunctional CCA protein.